The following is a 247-amino-acid chain: uncharacterized protein (247 aa).

Residues Leu19, Asp38, Asp63, and Val64 each contribute to the NAD(+) site. Ser142 contributes to the substrate binding site. Positions 155, 159, and 190 each coordinate NAD(+). Tyr155 acts as the Proton acceptor in catalysis.

This sequence belongs to the short-chain dehydrogenases/reductases (SDR) family.

This is an uncharacterized protein from Mycobacterium bovis (strain ATCC BAA-935 / AF2122/97).